Reading from the N-terminus, the 768-residue chain is Levansucrase (768 aa).

Residues 1–36 (MLENKKHKKMSLSGKSLLMGTLSTAAIVLSASTVNA) form the signal peptide. 4 stretches are compositionally biased toward polar residues: residues 57 to 68 (SASVNKNDNSGL), 80 to 99 (TETN…SQVN), 106 to 134 (SSTQ…QDSD), and 143 to 153 (NNSQGQSSTSS). Residues 57–158 (SASVNKNDNS…SSTSSEKTEL (102 aa)) form a disordered region. 3 residues coordinate sucrose: tryptophan 250, aspartate 251, and serine 320. Aspartate 251 serves as the catalytic Nucleophile. A Ca(2+)-binding site is contributed by aspartate 398. 2 residues coordinate sucrose: arginine 403 and aspartate 404. Glutamine 429, asparagine 468, and aspartate 502 together coordinate Ca(2+). Residue glutamate 503 participates in sucrose binding. Residue glutamate 505 is the Proton donor/acceptor of the active site. Arginine 523 contacts sucrose. Residues 688 to 736 (HQPVTPNVPTTPEKPENPTTPNTPDTPRTPEVPTTPVKKTTQSELPKAG) form a disordered region. The segment covering 691–727 (VTPNVPTTPEKPENPTTPNTPDTPRTPEVPTTPVKKT) has biased composition (low complexity). The LPXTG sorting signal motif lies at 732 to 736 (LPKAG). Pentaglycyl murein peptidoglycan amidated alanine is present on alanine 735. Residues 736-768 (GAKDGIAATILGAISSMLGVIGLAGISKRKRNN) constitute a propeptide, removed by sortase.

This sequence belongs to the glycosyl hydrolase 68 family.

The protein localises to the secreted. It localises to the cell wall. Its subcellular location is the cell surface. The catalysed reaction is [6)-beta-D-fructofuranosyl-(2-&gt;](n) alpha-D-glucopyranoside + sucrose = [6)-beta-D-fructofuranosyl-(2-&gt;](n+1) alpha-D-glucopyranoside + D-glucose. With respect to regulation, calcium ions are required for optimal activity, but do not seem to be essential since addition of EDTA causes only a 48% drop in activity. Ca(2+) may play an important structural role and promote stability of levansucrase. Its function is as follows. Fructosyltransferase that catalyzes the polymerization of the fructose moiety of sucrose to produce levan polymer and the fructo-oligosaccharide (FOS) 1-kestose. Is also able to convert raffinose into a fructan polymer and a single oligosaccharide (most likely Gal-Glc-Frc-Frc) in vitro; however, L.gasseri strain DSM 20077 is unable to ferment raffinose. Also displays sucrose hydrolase activity. This Lactobacillus gasseri protein is Levansucrase.